We begin with the raw amino-acid sequence, 149 residues long: Ribonuclease H (149 aa).

The RNase H type-1 domain occupies 1–142 (MSDSVELFTD…ADQLANRGVD (142 aa)). Mg(2+)-binding residues include Asp-10, Glu-48, Asp-70, and Asp-134.

This sequence belongs to the RNase H family. In terms of assembly, monomer. Requires Mg(2+) as cofactor.

The protein resides in the cytoplasm. The enzyme catalyses Endonucleolytic cleavage to 5'-phosphomonoester.. Its function is as follows. Endonuclease that specifically degrades the RNA of RNA-DNA hybrids. The polypeptide is Ribonuclease H (Pseudomonas savastanoi pv. phaseolicola (strain 1448A / Race 6) (Pseudomonas syringae pv. phaseolicola (strain 1448A / Race 6))).